Reading from the N-terminus, the 374-residue chain is UPF0754 membrane protein SAB1779c (374 aa).

A run of 2 helical transmembrane segments spans residues 4-24 (LFII…TNVI) and 354-374 (SLGF…AIFV).

This sequence belongs to the UPF0754 family.

Its subcellular location is the cell membrane. The protein is UPF0754 membrane protein SAB1779c of Staphylococcus aureus (strain bovine RF122 / ET3-1).